Consider the following 356-residue polypeptide: Tyrosine recombinase XerS (356 aa).

The 106-residue stretch at 16–121 folds into the Core-binding (CB) domain; it reads LMPWYVLEYY…ALSSLYKYLT (106 aa). Residues 169 to 354 form the Tyr recombinase domain; it reads EFLEYVDCEY…VNDEQKNALD (186 aa). Catalysis depends on residues Arg-210, Lys-234, His-306, Arg-309, and His-332. The active-site O-(3'-phospho-DNA)-tyrosine intermediate is Tyr-341.

It belongs to the 'phage' integrase family. XerS subfamily.

It is found in the cytoplasm. FtsK is required for recombination. Site-specific tyrosine recombinase, which acts by catalyzing the cutting and rejoining of the recombining DNA molecules. Essential to convert dimers of the bacterial chromosome into monomers to permit their segregation at cell division. This is Tyrosine recombinase XerS from Streptococcus mutans serotype c (strain ATCC 700610 / UA159).